A 194-amino-acid polypeptide reads, in one-letter code: MRLSGDPRILSVIMVKTNILSNHFLVAMPQLNDFTFTKAVIYVSQHDAKGALGIIINRPLALTLGKVLEHLNIEIAQPQIANHPVLMGGPIGQEHGFIVYEQESPQGAEILLSASKDMLDDIAKNKGPDDFLITLGYAGWEAGQLENEIARNDWLVVPFNRKILFETPLKSRWQKAAALIGVDINQLSGQIGHA.

The protein belongs to the UPF0301 (AlgH) family.

The polypeptide is UPF0301 protein CBU_2093 (Coxiella burnetii (strain RSA 493 / Nine Mile phase I)).